Consider the following 261-residue polypeptide: Tryptophan synthase alpha chain (261 aa).

Catalysis depends on proton acceptor residues glutamate 49 and aspartate 60.

It belongs to the TrpA family. Tetramer of two alpha and two beta chains.

It catalyses the reaction (1S,2R)-1-C-(indol-3-yl)glycerol 3-phosphate + L-serine = D-glyceraldehyde 3-phosphate + L-tryptophan + H2O. It participates in amino-acid biosynthesis; L-tryptophan biosynthesis; L-tryptophan from chorismate: step 5/5. In terms of biological role, the alpha subunit is responsible for the aldol cleavage of indoleglycerol phosphate to indole and glyceraldehyde 3-phosphate. The sequence is that of Tryptophan synthase alpha chain from Roseiflexus sp. (strain RS-1).